The primary structure comprises 1492 residues: Neogenin (1492 aa).

Positions 1–36 are cleaved as a signal peptide; that stretch reads MAAEREAGRLLCTSSSRRCCPPPPLLLLLPLLLLLG. The Extracellular portion of the chain corresponds to 37 to 1136; it reads RPASGAAATK…PTSPLDSNML (1100 aa). Ig-like C2-type domains are found at residues 63–158, 163–249, 254–347, and 352–437; these read PFYF…AKLT, PRFT…AELK, PEEI…AELT, and PGFL…AQLI. Asn84 carries an N-linked (GlcNAc...) asparagine glycan. Cystine bridges form between Cys85-Cys140, Cys184-Cys232, and Cys281-Cys331. N-linked (GlcNAc...) asparagine glycosylation is present at Asn221. N-linked (GlcNAc...) asparagine glycosylation is present at Asn337. A disulfide bond links Cys373 and Cys421. Fibronectin type-III domains follow at residues 472–566, 572–662, 667–762, 772–862, 887–986, and 988–1085; these read APRD…TQPE, PAPN…TLSD, APQN…TFES, VPSS…RPHT, PPVG…LVPT, and PPKD…TPKA. 2 N-linked (GlcNAc...) asparagine glycosylation sites follow: Asn501 and Asn520. N-linked (GlcNAc...) asparagine glycans are attached at residues Asn670 and Asn746. Asn940 carries N-linked (GlcNAc...) asparagine glycosylation. The tract at residues 1072 to 1128 is disordered; that stretch reads GPMSEAVQFRTPKADSSDKMPNDQALGSAGKGSRLPDLGSDYKPPMSGSNSPHGSPT. Positions 1083–1092 are enriched in basic and acidic residues; it reads PKADSSDKMP. Over residues 1118–1128 the composition is skewed to polar residues; sequence SGSNSPHGSPT. A helical transmembrane segment spans residues 1137 to 1157; the sequence is LVIIVSVGVITIVVVVVIAVF. Residues 1158-1492 lie on the Cytoplasmic side of the membrane; sequence CTRRTTSHQK…MKDLNAITTA (335 aa). Disordered stretches follow at residues 1205–1237, 1266–1300, and 1321–1396; these read PIDK…SMDS, PKMM…HSSS, and SMSL…FAVP. Ser1209 and Ser1225 each carry phosphoserine. Positions 1222–1237 are enriched in polar residues; it reads PRNSQDITPVDNSMDS. Thr1229 bears the Phosphothreonine mark. Composition is skewed to polar residues over residues 1321–1353 and 1361–1380; these read SMSL…TCCT and ATSS…QSLP. The residue at position 1432 (Ser1432) is a Phosphoserine. A Phosphothreonine modification is found at Thr1435. Ser1463, Ser1465, and Ser1466 each carry phosphoserine.

This sequence belongs to the immunoglobulin superfamily. DCC family. As to quaternary structure, interacts with BMP2, BMP4, BMP6, and BMP7. Interacts with RGMA and RGMB. Interacts with MYO10. In terms of tissue distribution, widely expressed.

It is found in the cell membrane. Multi-functional cell surface receptor regulating cell adhesion in many diverse developmental processes, including neural tube and mammary gland formation, myogenesis and angiogenesis. Receptor for members of the BMP, netrin, and repulsive guidance molecule (RGM) families. Netrin-Neogenin interactions result in a chemoattractive axon guidance response and cell-cell adhesion, the interaction between NEO1/Neogenin and RGMa and RGMb induces a chemorepulsive response. This is Neogenin from Mus musculus (Mouse).